A 948-amino-acid polypeptide reads, in one-letter code: UvrABC system protein A (948 aa).

33–40 (GLSGSGKS) provides a ligand contact to ATP. The C4-type zinc finger occupies 252–279 (CPICGFSIGELEPRMFSFNSPFGACPTC). ABC transporter domains follow at residues 309-587 (WIPT…KKSL) and 607-935 (ASDR…KYLK). 639-646 (GVSGSGKS) is an ATP binding site. The C4-type zinc-finger motif lies at 738–764 (CEACKGDGIIKIEMHFLPDVYVPCEVC).

Belongs to the ABC transporter superfamily. UvrA family. As to quaternary structure, forms a heterotetramer with UvrB during the search for lesions.

It localises to the cytoplasm. Functionally, the UvrABC repair system catalyzes the recognition and processing of DNA lesions. UvrA is an ATPase and a DNA-binding protein. A damage recognition complex composed of 2 UvrA and 2 UvrB subunits scans DNA for abnormalities. When the presence of a lesion has been verified by UvrB, the UvrA molecules dissociate. This Staphylococcus aureus (strain MSSA476) protein is UvrABC system protein A.